A 66-amino-acid chain; its full sequence is ATP synthase subunit c (66 aa).

Transmembrane regions (helical) follow at residues L3 to M23 and I45 to I65.

Belongs to the ATPase C chain family. In terms of assembly, F-type ATPases have 2 components, F(1) - the catalytic core - and F(0) - the membrane proton channel. F(1) has five subunits: alpha(3), beta(3), gamma(1), delta(1), epsilon(1). F(0) has three main subunits: a(1), b(2) and c(10-14). The alpha and beta chains form an alternating ring which encloses part of the gamma chain. F(1) is attached to F(0) by a central stalk formed by the gamma and epsilon chains, while a peripheral stalk is formed by the delta and b chains.

The protein resides in the cell membrane. Its function is as follows. F(1)F(0) ATP synthase produces ATP from ADP in the presence of a proton or sodium gradient. F-type ATPases consist of two structural domains, F(1) containing the extramembraneous catalytic core and F(0) containing the membrane proton channel, linked together by a central stalk and a peripheral stalk. During catalysis, ATP synthesis in the catalytic domain of F(1) is coupled via a rotary mechanism of the central stalk subunits to proton translocation. In terms of biological role, key component of the F(0) channel; it plays a direct role in translocation across the membrane. A homomeric c-ring of between 10-14 subunits forms the central stalk rotor element with the F(1) delta and epsilon subunits. This Streptococcus oralis protein is ATP synthase subunit c (atpE).